A 132-amino-acid chain; its full sequence is Acyl-CoA thioester hydrolase YciA (132 aa).

In terms of domain architecture, HotDog ACOT-type spans 8 to 123 (PQGDLVLRTL…LFKYVAVDPE (116 aa)).

Belongs to the acyl coenzyme A hydrolase family.

Functionally, catalyzes the hydrolysis of the thioester bond in palmitoyl-CoA and malonyl-CoA. In Escherichia coli O6:H1 (strain CFT073 / ATCC 700928 / UPEC), this protein is Acyl-CoA thioester hydrolase YciA (yciA).